A 189-amino-acid chain; its full sequence is MSAKNDVTGKVIAIMGVSGAGKSTIGKMLGKALSCDFLDADDFHSLSNRDKMRQGIALSDEDRMPWLEKIQESLRKRLLDGETVVLACSSLRKQYREILRGSDPDYKPGSYTSCKVTFVLLEGNAEVIAARLQKRASEEEHFMPLTLLQSQFDLLQADECEKIFKISVVLSPEVIVNTILEMVANSLNP.

Residue 16–23 (GVSGAGKS) participates in ATP binding.

This sequence belongs to the gluconokinase GntK/GntV family. In terms of assembly, monomer.

The enzyme catalyses D-gluconate + ATP = 6-phospho-D-gluconate + ADP + H(+). The protein operates within carbohydrate acid metabolism; D-gluconate degradation. Its function is as follows. Phosphorylates gluconate to 6-phosphogluconate. The chain is Gluconokinase from Arabidopsis thaliana (Mouse-ear cress).